The chain runs to 602 residues: Prostaglandin G/H synthase 1 (602 aa).

A signal peptide spans 1–26; the sequence is MSRRSLSLWFPLLLLLLLPPTPSVLL. The region spanning 34 to 72 is the EGF-like domain; it reads PVNPCCYYPCQNQGVCVRFGLDNYQCDCTRTGYSGPNCT. 4 cysteine pairs are disulfide-bonded: C38/C49, C39/C161, C43/C59, and C61/C71. 3 N-linked (GlcNAc...) asparagine glycosylation sites follow: N70, N106, and N146. Catalysis depends on H209, which acts as the Proton acceptor. The For cyclooxygenase activity role is filled by Y387. Residue H390 participates in heme b binding. The cysteines at positions 571 and 577 are disulfide-linked.

It belongs to the prostaglandin G/H synthase family. In terms of assembly, homodimer. Requires heme b as cofactor.

The protein resides in the microsome membrane. It localises to the endoplasmic reticulum membrane. The catalysed reaction is (5Z,8Z,11Z,14Z)-eicosatetraenoate + AH2 + 2 O2 = prostaglandin H2 + A + H2O. It catalyses the reaction (5Z,8Z,11Z,14Z)-eicosatetraenoate + 2 O2 = prostaglandin G2. The enzyme catalyses prostaglandin G2 + AH2 = prostaglandin H2 + A + H2O. It carries out the reaction (9Z,12Z)-octadecadienoate + AH2 + O2 = (9R)-hydroxy-(10E,12Z)-octadecadienoate + A + H2O. The catalysed reaction is (9Z,12Z)-octadecadienoate + AH2 + O2 = (9S)-hydroxy-(10E,12Z)-octadecadienoate + A + H2O. It catalyses the reaction (9Z,12Z)-octadecadienoate + AH2 + O2 = (13S)-hydroxy-(9Z,11E)-octadecadienoate + A + H2O. The enzyme catalyses (9Z,12Z)-octadecadienoate + AH2 + O2 = (13R)-hydroxy-(9Z,11E)-octadecadienoate + A + H2O. The protein operates within lipid metabolism; prostaglandin biosynthesis. The cyclooxygenase activity is inhibited by nonsteroidal anti-inflammatory drugs (NSAIDs) including ibuprofen, flurbiprofen, ketoprofen, naproxen, flurbiprofen, anirolac, fenclofenac and diclofenac. Its function is as follows. Dual cyclooxygenase and peroxidase that plays an important role in the biosynthesis pathway of prostanoids, a class of C20 oxylipins mainly derived from arachidonate ((5Z,8Z,11Z,14Z)-eicosatetraenoate, AA, C20:4(n-6)), with a particular role in the inflammatory response. The cyclooxygenase activity oxygenates AA to the hydroperoxy endoperoxide prostaglandin G2 (PGG2), and the peroxidase activity reduces PGG2 to the hydroxy endoperoxide prostaglandin H2 (PGH2), the precursor of all 2-series prostaglandins and thromboxanes. This complex transformation is initiated by abstraction of hydrogen at carbon 13 (with S-stereochemistry), followed by insertion of molecular O2 to form the endoperoxide bridge between carbon 9 and 11 that defines prostaglandins. The insertion of a second molecule of O2 (bis-oxygenase activity) yields a hydroperoxy group in PGG2 that is then reduced to PGH2 by two electrons. Involved in the constitutive production of prostanoids in particular in the stomach and platelets. In gastric epithelial cells, it is a key step in the generation of prostaglandins, such as prostaglandin E2 (PGE2), which plays an important role in cytoprotection. In platelets, it is involved in the generation of thromboxane A2 (TXA2), which promotes platelet activation and aggregation, vasoconstriction and proliferation of vascular smooth muscle cells. Can also use linoleate (LA, (9Z,12Z)-octadecadienoate, C18:2(n-6)) as substrate and produce hydroxyoctadecadienoates (HODEs) in a regio- and stereospecific manner, being (9R)-HODE ((9R)-hydroxy-(10E,12Z)-octadecadienoate) and (13S)-HODE ((13S)-hydroxy-(9Z,11E)-octadecadienoate) its major products. The sequence is that of Prostaglandin G/H synthase 1 from Mus musculus (Mouse).